The sequence spans 130 residues: ATP synthase epsilon chain, chloroplastic (130 aa).

It belongs to the ATPase epsilon chain family. As to quaternary structure, F-type ATPases have 2 components, CF(1) - the catalytic core - and CF(0) - the membrane proton channel. CF(1) has five subunits: alpha(3), beta(3), gamma(1), delta(1), epsilon(1). CF(0) has three main subunits: a, b and c.

It localises to the plastid. The protein localises to the chloroplast thylakoid membrane. In terms of biological role, produces ATP from ADP in the presence of a proton gradient across the membrane. The sequence is that of ATP synthase epsilon chain, chloroplastic from Emiliania huxleyi (Coccolithophore).